Reading from the N-terminus, the 80-residue chain is Small membrane A-kinase anchor protein (80 aa).

Gly2 carries N-myristoyl glycine lipidation.

It belongs to the small membrane AKAP family. May be palmitoylated at Cys-3.

It is found in the cell membrane. Functionally, binds to type I regulatory subunits of protein kinase A and may anchor/target them to the plasma membrane. In Tetraodon nigroviridis (Spotted green pufferfish), this protein is Small membrane A-kinase anchor protein.